The following is a 2017-amino-acid chain: MSLGLAGAQEVELTLETVIQTLESSVLCQEKGLGARDLAQDAQITSLPALIREIVTRNLSQPESPVLLPATEMASLLSLQEENQLLQQELSRVEDLLAQSRAERDELAIKYNAVSERLEQALRLEPGELETQEPRGLVRQSVELRRQLQEEQASYRRKLQAYQEGQQRQAQLVQRLQGKILQYKKRCSELEQQLLERSGELEQQRLRDTEHSQDLESALIRLEEEQQRSASLAQVNAMLREQLDQAGSANQALSEDIRKVTNDWTRCRKELEHREAAWRREEESFNAYFSNEHSRLLLLWRQVVGFRRLVSEVKMFTERDLLQLGGELARTSRAVQEAGLGLSTGLRLAESRAEAALEKQALLQAQLEEQLRDKVLREKDLAQQQMQSDLDKADLSARVTELGLAVKRLEKQNLEKDQVNKDLTEKLEALESLRLQEQAALETEDGEGLQQTLRDLAQAVLSDSESGVQLSGSERTADASNGSLRGLSGQRTPSPPRRSSPGRGRSPRRGPSPACSDSSTLALIHSALHKRQLQVQDMRGRYEASQDLLGTLRKQLSDSESERRALEEQLQRLRDKTDGAMQAHEDAQREVQRLRSANELLSREKSNLAHSLQVAQQQAEELRQEREKLQAAQEELRRQRDRLEEEQEDAVQDGARVRRELERSHRQLEQLEGKRSVLAKELVEVREALSRATLQRDMLQAEKAEVAEALTKAEAGRVELELSMTKLRAEEASLQDSLSKLSALNESLAQDKLDLNRLVAQLEEEKSALQGRQRQAEQEATVAREEQERLEELRLEQEVARQGLEGSLRVAEQAQEALEQQLPTLRHERSQLQEQLAQLSRQLSGREQELEQARREAQRQVEALERAAREKEALAKEHAGLAVQLVAAEREGRTLSEEATRLRLEKEALEGSLFEVQRQLAQLEARREQLEAEGQALLLAKETLTGELAGLRQQIIATQEKASLDKELMAQKLVQAEREAQASLREQRAAHEEDLQRLQREKEAAWRELEAERAQLQSQLQREQEELLARLEAEKEELSEEIAALQQERDEGLLLAESEKQQALSLKESEKTALSEKLMGTRHSLATISLEMERQKRDAQSRQEQDRSTVNALTSELRDLRAQREEAAAAHAQEVRRLQEQARDLGKQRDSCLREAEELRTQLRLLEDARDGLRRELLEAQRKLRESQEGREVQRQEAGELRRSLGEGAKEREALRRSNEELRSAVKKAESERISLKLANEDKEQKLALLEEARTAVGKEAGELRTGLQEVERSRLEARRELQELRRQMKMLDSENTRLGRELAELQGRLALGERAEKESRRETLGLRQRLLKGEASLEVMRQELQVAQRKLQEQEGEFRTRERRLLGSLEEARGTEKQQLDHARGLELKLEAARAEAAELGLRLSAAEGRAQGLEAELARVEVQRRAAEAQLGGLRSALRRGLGLGRAPSPAPRPVPGSPARDAPAEGSGEGLNSPSTLECSPGSQPPSPGPATSPASPDLDPEAVRGALREFLQELRSAQRERDELRTQTSALNRQLAEMEAERDSATSRARQLQKAVAESEEARRSVDGRLSGVQAELALQEESVRRSERERRATLDQVATLERSLQATESELRASQEKISKMKANETKLEGDKRRLKEVLDASESRTVKLELQRRSLEGELQRSRLGLSDREAQAQALQDRVDSLQRQVADSEVKAGTLQLTVERLNGALAKVEESEGALRDKVRGLTEALAQSSASLNSTRDKNLHLQKALTACEHDRQVLQERLDAARQALSEARKQSSSLGEQVQTLRGEVADLELQRVEAEGQLQQLREVLRQRQEGEAAALNTVQKLQDERRLLQERLGSLQRALAQLEAEKREVERSALRLEKDRVALRRTLDKVEREKLRSHEDTVRLSAEKGRLDRTLTGAELELAEAQRQIQQLEAQVVVLEQSHSPAQLEVDAQQQQLELQQEVERLRSAQAQTERTLEARERAHRQRVRGLEEQVSTLKGQLQQELRRSSAPFSPPSGPPEK.

Coiled coils occupy residues 70–262 (ATEM…KVTN) and 318–444 (ERDL…LETE). A compositionally biased stretch (polar residues) spans 464-483 (SESGVQLSGSERTADASNGS). Residues 464–518 (SESGVQLSGSERTADASNGSLRGLSGQRTPSPPRRSSPGRGRSPRRGPSPACSDS) are disordered. Residues 499–513 (SSPGRGRSPRRGPSP) are compositionally biased toward low complexity. 2 coiled-coil regions span residues 546–1058 (QDLL…LAES) and 1091–1438 (EMER…GLRS). Disordered stretches follow at residues 1184–1226 (LRES…RSAV) and 1443–1575 (GLGL…GRLS). A phosphoserine mark is found at Ser1460, Ser1470, Ser1476, Ser1483, Ser1486, Ser1490, and Ser1496. A coiled-coil region spans residues 1505–1704 (EAVRGALREF…DSEVKAGTLQ (200 aa)). Residues 1510-1529 (ALREFLQELRSAQRERDELR) are compositionally biased toward basic and acidic residues. 2 positions are modified to phosphoserine: Ser1575 and Ser1660. Positions 1962-2017 (RSAQAQTERTLEARERAHRQRVRGLEEQVSTLKGQLQQELRRSSAPFSPPSGPPEK) are disordered. Residues 1989–1999 (QVSTLKGQLQQ) show a composition bias toward polar residues. The segment covering 2008–2017 (FSPPSGPPEK) has biased composition (pro residues).

Belongs to the rootletin family. As to quaternary structure, homomer. Interacts with KLC3, NEK2 and the N-terminus of CEP250. Interacts with CEP44. Interacts with CCDC102B (via N-terminus). In terms of processing, phosphorylated by NEK2 which may regulate its association with centrosomes.

The protein localises to the cytoplasm. It is found in the cytoskeleton. Its subcellular location is the microtubule organizing center. It localises to the centrosome. The protein resides in the centriole. The protein localises to the cilium basal body. Functionally, major structural component of the ciliary rootlet, a cytoskeletal-like structure in ciliated cells which originates from the basal body at the proximal end of a cilium and extends proximally toward the cell nucleus. Furthermore, is required for the correct positioning of the cilium basal body relative to the cell nucleus, to allow for ciliogenesis. Contributes to centrosome cohesion before mitosis. The polypeptide is Rootletin (Homo sapiens (Human)).